We begin with the raw amino-acid sequence, 101 residues long: Putative septation protein SpoVG (101 aa).

Positions 82–101 are disordered; that stretch reads ELKKGGAAPARATGTDPHED.

This sequence belongs to the SpoVG family.

Its function is as follows. Could be involved in septation. The protein is Putative septation protein SpoVG of Anaeromyxobacter dehalogenans (strain 2CP-1 / ATCC BAA-258).